The following is a 200-amino-acid chain: Transgelin (200 aa).

Serine 2 is modified (N-acetylserine). The residue at position 11 (serine 11) is a Phosphoserine. The Calponin-homology (CH) domain occupies 26-136; sequence PEAIQNIKIW…QTLKSLSRYA (111 aa). The segment at 144–168 is disordered; sequence FPVLGPQLSTKKPRPPVKSKPKHLQ. Residues 151–164 form an interaction with SH3 domain of ABP1 region; the sequence is LSTKKPRPPVKSKP. Basic residues predominate over residues 154 to 165; sequence KKPRPPVKSKPK.

Binds to actin. Interacts with ABP1.

The protein resides in the cytoplasm. The protein localises to the cytoskeleton. Its subcellular location is the actin patch. In terms of biological role, has actin-binding and actin-bundling activity. Stabilizes actin filaments against disassembly. The polypeptide is Transgelin (SCP1) (Saccharomyces cerevisiae (strain ATCC 204508 / S288c) (Baker's yeast)).